Reading from the N-terminus, the 177-residue chain is Zinc metalloproteinase-disintegrin-like scutiarin (177 aa).

Positions 1–63 (NPCCDAATCK…ECPADVFHKN (63 aa)) constitute a Disintegrin domain. Intrachain disulfides connect cysteine 3/cysteine 26, cysteine 17/cysteine 23, cysteine 22/cysteine 48, cysteine 35/cysteine 55, cysteine 42/cysteine 74, cysteine 67/cysteine 79, cysteine 86/cysteine 136, cysteine 101/cysteine 147, cysteine 114/cysteine 124, and cysteine 131/cysteine 173. Residues 41–43 (ECD) carry the D/ECD-tripeptide motif. The Ca(2+) site is built by aspartate 43, proline 44, glutamate 46, aspartate 58, and valine 59.

This sequence belongs to the venom metalloproteinase (M12B) family. P-III subfamily. P-IIIa sub-subfamily. Monomer. Zn(2+) serves as cofactor. In terms of processing, glycosylated. Expressed by the venom gland.

The protein localises to the secreted. Its function is as follows. Snake venom metalloproteinase that impairs hemostasis in the envenomed animal. The protein is Zinc metalloproteinase-disintegrin-like scutiarin of Crotalus scutulatus scutulatus (Mojave rattlesnake).